Here is a 256-residue protein sequence, read N- to C-terminus: Pimeloyl-[acyl-carrier protein] methyl ester esterase (256 aa).

The AB hydrolase-1 domain maps to 15 to 242; that stretch reads HLVLLHGWGL…AAHAPFISHP (228 aa). Residues Trp-22, 82-83, and 143-147 contribute to the substrate site; these read SL and FLALQ. Catalysis depends on Ser-82, which acts as the Nucleophile. Catalysis depends on residues Asp-207 and His-235. A substrate-binding site is contributed by His-235.

Belongs to the AB hydrolase superfamily. Carboxylesterase BioH family. Monomer.

It localises to the cytoplasm. The enzyme catalyses 6-carboxyhexanoyl-[ACP] methyl ester + H2O = 6-carboxyhexanoyl-[ACP] + methanol + H(+). It functions in the pathway cofactor biosynthesis; biotin biosynthesis. Functionally, the physiological role of BioH is to remove the methyl group introduced by BioC when the pimeloyl moiety is complete. It allows to synthesize pimeloyl-ACP via the fatty acid synthetic pathway through the hydrolysis of the ester bonds of pimeloyl-ACP esters. In Citrobacter koseri (strain ATCC BAA-895 / CDC 4225-83 / SGSC4696), this protein is Pimeloyl-[acyl-carrier protein] methyl ester esterase.